The primary structure comprises 927 residues: Probable UDP-N-acetylglucosamine--peptide N-acetylglucosaminyltransferase SPINDLY (927 aa).

A disordered region spans residues 1–31; it reads MGRPGMDSSEGRESNGVVPERNGGAVPAKQQ. 11 TPR repeats span residues 34–67, 68–101, 102–135, 143–176, 177–210, 211–244, 252–285, 286–319, 320–353, 355–387, and 388–421; these read GKDT…DEAN, VEAL…DPGN, ACAL…DPSY, AIVL…DSHY, APAY…RPLY, AEAY…SPNF, AIAL…NWHY, ADAM…NPRC, AEAC…KPNF, QSLN…NSTY, and AEAY…DPDS. The interval 422 to 927 is catalytic region; sequence RNAGQNRLLA…KVEANGHISR (506 aa).

This sequence belongs to the glycosyltransferase 41 family. O-GlcNAc transferase subfamily.

Its subcellular location is the nucleus. It carries out the reaction L-seryl-[protein] + UDP-N-acetyl-alpha-D-glucosamine = 3-O-(N-acetyl-beta-D-glucosaminyl)-L-seryl-[protein] + UDP + H(+). The enzyme catalyses L-threonyl-[protein] + UDP-N-acetyl-alpha-D-glucosamine = 3-O-(N-acetyl-beta-D-glucosaminyl)-L-threonyl-[protein] + UDP + H(+). The protein operates within protein modification; protein glycosylation. In terms of biological role, probable O-linked N-acetylglucosamine transferase (OGT) involved in various processes such as gibberellin (GA) signaling pathway. OGTs catalyze the addition of nucleotide-activated sugars directly onto the polypeptide through O-glycosidic linkage with the hydroxyl of serine or threonine. Probably acts by adding O-linked sugars to yet unknown proteins. The sequence is that of Probable UDP-N-acetylglucosamine--peptide N-acetylglucosaminyltransferase SPINDLY (SPY) from Oryza sativa subsp. japonica (Rice).